A 289-amino-acid chain; its full sequence is Delta-sarcoglycan (289 aa).

Topologically, residues 1 to 35 (MPQEQYTHHRSTMPGSVGPQVYKVGIYGWRKRCLY) are cytoplasmic. A helical; Signal-anchor for type II membrane protein transmembrane segment spans residues 36 to 56 (FFVLLLMILILVNLAMTIWIL). Topologically, residues 57-289 (KVMNFTIDGM…TCQINTSVCL (233 aa)) are extracellular. N-linked (GlcNAc...) asparagine glycosylation is found at N60 and N108. 2 cysteine pairs are disulfide-bonded: C263–C288 and C265–C281. A glycan (N-linked (GlcNAc...) asparagine) is linked at N284.

It belongs to the sarcoglycan beta/delta/gamma/zeta family. Interacts with FLNC and DAG1. Cross-link to form 2 major subcomplexes: one consisting of SGCB, SGCD and SGCG and the other consisting of SGCB and SGCD. The association between SGCB and SGCG is particularly strong while SGCA is loosely associated with the other sarcoglycans. In terms of processing, glycosylated. Disulfide bonds are present. As to expression, most strongly expressed in skeletal and cardiac muscle. Also detected in smooth muscle. Weak expression in brain and lung.

The protein resides in the cell membrane. It localises to the sarcolemma. It is found in the cytoplasm. The protein localises to the cytoskeleton. Functionally, component of the sarcoglycan complex, a subcomplex of the dystrophin-glycoprotein complex which forms a link between the F-actin cytoskeleton and the extracellular matrix. The polypeptide is Delta-sarcoglycan (SGCD) (Homo sapiens (Human)).